Here is a 251-residue protein sequence, read N- to C-terminus: Gamma-glutamyl peptidase 4 (251 aa).

Residues 16-213 (SEFAKKTYGG…IDRVLAGGHI (198 aa)) enclose the Glutamine amidotransferase type-1 domain. The active-site Nucleophile is cysteine 100. Active-site residues include histidine 192 and glutamate 194.

It belongs to the peptidase C26 family.

Its subcellular location is the cytoplasm. It is found in the cytosol. It participates in secondary metabolite biosynthesis. Functionally, involved in glucosinolate biosynthesis. Hydrolyzes the gamma-glutamyl peptide bond of several glutathione (GSH) conjugates to produce Cys-Gly conjugates related to glucosinolates. The gamma-Glu-Cys-Gly-GSH conjugates are the sulfur-donating molecule in glucosinolate biosynthesis. The chain is Gamma-glutamyl peptidase 4 from Arabidopsis thaliana (Mouse-ear cress).